The chain runs to 853 residues: Cytochrome P450 monooxygenase mpaDE (853 aa).

Over 1–6 (MKSLSL) the chain is Lumenal. The chain crosses the membrane as a helical span at residues 7–29 (TWITAVAVVLYLVQRYVRSYWRL). Topologically, residues 30 to 853 (KDIPGPVLAK…DIENSIEGQK (824 aa)) are cytoplasmic. A heme-binding site is contributed by cysteine 449.

Belongs to the cytochrome P450 family. It depends on heme as a cofactor.

The protein localises to the endoplasmic reticulum membrane. The catalysed reaction is 5-methylorsellinate + reduced [NADPH--hemoprotein reductase] + O2 = 4,6-dihydroxy-2-(hydroxymethyl)-3-methylbenzoate + oxidized [NADPH--hemoprotein reductase] + H2O + H(+). It carries out the reaction 4,6-dihydroxy-2-(hydroxymethyl)-3-methylbenzoate + H(+) = 5,7-dihydroxy-4-methylphthalide + H2O. The protein operates within secondary metabolite biosynthesis; terpenoid biosynthesis. Its function is as follows. Cytochrome P450 monooxygenase; part of the gene cluster that mediates the biosynthesis of mycophenolic acid (MPA), the first isolated antibiotic natural product in the world obtained from a culture of Penicillium brevicompactum in 1893. MpaDE is an endoplasmic reticulum-bound enzyme that catalyzes the conversion of 5-methylorsellinic acid (5MOA) into the phthalide compound 5,7-dihydroxy-4,6-dimethylphthalide (DHMP). MpaDE first catalyzes hydroxylation of 5-MOA to 4,6-dihydroxy-2-(hydroxymethyl)-3-methylbenzoic acid (DHMB), and then acts as a lactone synthase that catalyzes the ring closure to convert DHMB into DHMP. The first step of the pathway is the synthesis of 5-methylorsellinic acid (5MOA) by the cytosolic polyketide synthase mpaC. 5MOA is then converted to the phthalide compound 5,7-dihydroxy-4,6-dimethylphthalide (DHMP) by the endoplasmic reticulum-bound cytochrome P450 monooxygenase mpaDE. MpaDE first catalyzes hydroxylation of 5-MOA to 4,6-dihydroxy-2-(hydroxymethyl)-3-methylbenzoic acid (DHMB). MpaDE then acts as a lactone synthase that catalyzes the ring closure to convert DHMB into DHMP. The next step is the prenylation of DHMP by the Golgi apparatus-associated prenyltransferase mpaA to yield farnesyl-DHMP (FDHMP). The ER-bound oxygenase mpaB then mediates the oxidative cleavage the C19-C20 double bond in FDHMP to yield FDHMP-3C via a mycophenolic aldehyde intermediate. The O-methyltransferase mpaG catalyzes the methylation of FDHMP-3C to yield MFDHMP-3C. After the cytosolic methylation of FDHMP-3C, MFDHMP-3C enters into peroxisomes probably via free diffusion due to its low molecular weight. Upon a peroxisomal CoA ligation reaction, catalyzed by a beta-oxidation component enzyme acyl-CoA ligase ACL891, MFDHMP-3C-CoA would then be restricted to peroxisomes for the following beta-oxidation pathway steps. The peroxisomal beta-oxidation machinery than converts MFDHMP-3C-CoA into MPA_CoA, via a beta-oxidation chain-shortening process. Finally mpaH acts as a peroxisomal acyl-CoA hydrolase with high substrate specificity toward MPA-CoA to release the final product MPA. This Penicillium brevicompactum protein is Cytochrome P450 monooxygenase mpaDE.